A 156-amino-acid chain; its full sequence is MGKKGAGYGLRGGDFRYNDETVARLINAVMLDGKKEVATKVVYDAFDIIASKSEDGDALEVFRKAMSNVAPLVEVRSKRVGGATYQIPMEVQPARRTALAFRWIKQFATRRGGRSMAEKLAAELLDASNEQGASVKKRDEVHRMADANKAFAHFRF.

Belongs to the universal ribosomal protein uS7 family. Part of the 30S ribosomal subunit. Contacts proteins S9 and S11.

In terms of biological role, one of the primary rRNA binding proteins, it binds directly to 16S rRNA where it nucleates assembly of the head domain of the 30S subunit. Is located at the subunit interface close to the decoding center, probably blocks exit of the E-site tRNA. The sequence is that of Small ribosomal subunit protein uS7 from Chlorobaculum parvum (strain DSM 263 / NCIMB 8327) (Chlorobium vibrioforme subsp. thiosulfatophilum).